The primary structure comprises 278 residues: tRNA (guanine-N(7)-)-methyltransferase (278 aa).

Residues glycine 95, 118 to 119 (EI), 153 to 154 (NA), and cysteine 173 contribute to the S-adenosyl-L-methionine site. Residue aspartate 176 is part of the active site. Residue 251–253 (TEE) coordinates S-adenosyl-L-methionine.

This sequence belongs to the class I-like SAM-binding methyltransferase superfamily. TrmB family. Forms a complex with TRM82.

The protein resides in the nucleus. The catalysed reaction is guanosine(46) in tRNA + S-adenosyl-L-methionine = N(7)-methylguanosine(46) in tRNA + S-adenosyl-L-homocysteine. It functions in the pathway tRNA modification; N(7)-methylguanine-tRNA biosynthesis. Catalyzes the formation of N(7)-methylguanine at position 46 (m7G46) in tRNA. In Kluyveromyces lactis (strain ATCC 8585 / CBS 2359 / DSM 70799 / NBRC 1267 / NRRL Y-1140 / WM37) (Yeast), this protein is tRNA (guanine-N(7)-)-methyltransferase.